Reading from the N-terminus, the 95-residue chain is Protein TusB (95 aa).

It belongs to the DsrH/TusB family. Heterohexamer, formed by a dimer of trimers. The hexameric TusBCD complex contains 2 copies each of TusB, TusC and TusD. The TusBCD complex interacts with TusE.

It localises to the cytoplasm. Part of a sulfur-relay system required for 2-thiolation of 5-methylaminomethyl-2-thiouridine (mnm(5)s(2)U) at tRNA wobble positions. This Enterobacter sp. (strain 638) protein is Protein TusB.